We begin with the raw amino-acid sequence, 1071 residues long: Carbamoyl phosphate synthase large chain (1071 aa).

The interval 1–403 (MPKRTDLKSI…SFQKALRGLE (403 aa)) is carboxyphosphate synthetic domain. The ATP-grasp 1 domain maps to 133–328 (KEAMEKIGLS…IAKVAANWAV (196 aa)). R169, G175, G176, Q208, V210, E215, G241, V242, H243, Q285, and E299 together coordinate ATP. Mg(2+) contacts are provided by Q285, E299, and N301. Q285, E299, and N301 together coordinate Mn(2+). Positions 404–548 (TGLCGFNPAR…YSTYEEECES (145 aa)) are oligomerization domain. The tract at residues 549 to 930 (RPSDRKKVMI…AYYKAQLGAG (382 aa)) is carbamoyl phosphate synthetic domain. Positions 673–864 (QKVLNDLGLR…LAKVGARCMA (192 aa)) constitute an ATP-grasp 2 domain. The ATP site is built by R709, F748, L750, E755, G780, I781, H782, S783, Q823, and E835. Residues Q823, E835, and N837 each coordinate Mg(2+). The Mn(2+) site is built by Q823, E835, and N837. The MGS-like domain occupies 931–1071 (ERLNPTGKIF…ELHGRLKNRN (141 aa)). The tract at residues 931-1071 (ERLNPTGKIF…ELHGRLKNRN (141 aa)) is allosteric domain.

This sequence belongs to the CarB family. As to quaternary structure, composed of two chains; the small (or glutamine) chain promotes the hydrolysis of glutamine to ammonia, which is used by the large (or ammonia) chain to synthesize carbamoyl phosphate. Tetramer of heterodimers (alpha,beta)4. Requires Mg(2+) as cofactor. The cofactor is Mn(2+).

The enzyme catalyses hydrogencarbonate + L-glutamine + 2 ATP + H2O = carbamoyl phosphate + L-glutamate + 2 ADP + phosphate + 2 H(+). It catalyses the reaction hydrogencarbonate + NH4(+) + 2 ATP = carbamoyl phosphate + 2 ADP + phosphate + 2 H(+). Its pathway is amino-acid biosynthesis; L-arginine biosynthesis; carbamoyl phosphate from bicarbonate: step 1/1. It participates in pyrimidine metabolism; UMP biosynthesis via de novo pathway; (S)-dihydroorotate from bicarbonate: step 1/3. Large subunit of the glutamine-dependent carbamoyl phosphate synthetase (CPSase). CPSase catalyzes the formation of carbamoyl phosphate from the ammonia moiety of glutamine, carbonate, and phosphate donated by ATP, constituting the first step of 2 biosynthetic pathways, one leading to arginine and/or urea and the other to pyrimidine nucleotides. The large subunit (synthetase) binds the substrates ammonia (free or transferred from glutamine from the small subunit), hydrogencarbonate and ATP and carries out an ATP-coupled ligase reaction, activating hydrogencarbonate by forming carboxy phosphate which reacts with ammonia to form carbamoyl phosphate. This chain is Carbamoyl phosphate synthase large chain, found in Neisseria gonorrhoeae.